The sequence spans 379 residues: MLQKPNSAYFHIPFCSHICYYCDFAKVLMTGQPIDAYIESLIEEFQSFEIEKLRTIYIGGGTPSVLSAQQLERLLTAIAEQLDLEVLEEFTVEANPGDLSDEVIKVLADSAVNRISLGVQTFNNALLKKIGRTHTEVQVYDSVERLKKAGFENITIDLIYALPGQTMEMVKSDVEKFLELKLPHVALYSLILEDHTVFMNRQRRGLLRLPSEDKNADMYEYIMDILAKNGYNHYEVSNFGLPGFESKHNITYWDNEEYYGIGAGASGYLAGIRYKNLGPVHHYLKAAPTEKRINEEVLSKKSQIEEEMFLGLRKKSGVLVEKFENKFKCSFEKLYGEQITELINQKLLYNDRQRIHMTDKGFELGNNVFEKFLLDDINF.

One can recognise a Radical SAM core domain in the interval 1–232 (MLQKPNSAYF…MDILAKNGYN (232 aa)). Tyrosine 9 contacts S-adenosyl-L-methionine. The [4Fe-4S] cluster site is built by cysteine 15, cysteine 19, and cysteine 22. Residues glycine 60, 61–62 (GT), glutamate 93, glutamine 120, arginine 132, and aspartate 157 each bind S-adenosyl-L-methionine.

Belongs to the anaerobic coproporphyrinogen-III oxidase family. HemW subfamily. As to quaternary structure, homodimer.

The protein localises to the cytoplasm. It is found in the cell membrane. Could serve in the delivery of heme to a membrane-localized target protein. Binds one molecule of heme per monomer, possibly covalently; heme and Fe-S cluster binding are independent. Incubation with the reductant sodium dithionite increases binding. Does not have coproporphyrinogen III dehydrogenase activity in vitro, does not complement an E.coli hemN deletion in vivo. Binds 1 Fe-S cluster, it is probably [4Fe-4S]. The cluster is coordinated with 3 cysteines and an exchangeable S-adenosyl-L-methionine; only dimeric protein has the cluster. This chain is Heme chaperone HemW, found in Lactococcus lactis subsp. lactis (strain IL1403) (Streptococcus lactis).